Here is a 368-residue protein sequence, read N- to C-terminus: Homoserine O-acetyltransferase (368 aa).

Residues 43-346 (ILLEHALTGT…EYGHDAFLVE (304 aa)) form the AB hydrolase-1 domain. Ser-145 (nucleophile) is an active-site residue. A substrate-binding site is contributed by Arg-212. Catalysis depends on residues Asp-307 and His-340. Residue Asp-341 participates in substrate binding.

It belongs to the AB hydrolase superfamily. MetX family. In terms of assembly, homodimer.

It localises to the cytoplasm. The enzyme catalyses L-homoserine + acetyl-CoA = O-acetyl-L-homoserine + CoA. The protein operates within amino-acid biosynthesis; L-methionine biosynthesis via de novo pathway; O-acetyl-L-homoserine from L-homoserine: step 1/1. Transfers an acetyl group from acetyl-CoA to L-homoserine, forming acetyl-L-homoserine. This chain is Homoserine O-acetyltransferase, found in Listeria innocua serovar 6a (strain ATCC BAA-680 / CLIP 11262).